A 426-amino-acid chain; its full sequence is Phosphomethylpyrimidine synthase (426 aa).

Residues N65, M94, Y123, H162, 184–186 (SRG), 225–228 (DGMR), and E264 each bind substrate. H268 lines the Zn(2+) pocket. A substrate-binding site is contributed by Y291. H332 provides a ligand contact to Zn(2+). 3 residues coordinate [4Fe-4S] cluster: C408, C411, and C415.

It belongs to the ThiC family. It depends on [4Fe-4S] cluster as a cofactor.

The enzyme catalyses 5-amino-1-(5-phospho-beta-D-ribosyl)imidazole + S-adenosyl-L-methionine = 4-amino-2-methyl-5-(phosphooxymethyl)pyrimidine + CO + 5'-deoxyadenosine + formate + L-methionine + 3 H(+). Its pathway is cofactor biosynthesis; thiamine diphosphate biosynthesis. Catalyzes the synthesis of the hydroxymethylpyrimidine phosphate (HMP-P) moiety of thiamine from aminoimidazole ribotide (AIR) in a radical S-adenosyl-L-methionine (SAM)-dependent reaction. This chain is Phosphomethylpyrimidine synthase, found in Methanococcus maripaludis (strain C6 / ATCC BAA-1332).